The primary structure comprises 1295 residues: Unconventional myosin-VI (1295 aa).

The region spanning 2–53 (EDGRPVWAPHPTEGFQMGNIVDIGPDSLTIEPLGQKGKTFLALINQVFPAEE) is the Myosin N-terminal SH3-like domain. The Myosin motor domain maps to 57–771 (KDVEDNCSLM…KFAEFDQIMK (715 aa)). 151–158 (GESGAGKT) is a binding site for ATP. Residue S267 is modified to Phosphoserine. Residues 273–317 (YLNRGCTRYFANKETDKQILQNRKTPEHLKAGSLKDPLLDDHGDF) form a responsible for slow ATPase activity region. Residue T405 is modified to Phosphothreonine. A Phosphoserine modification is found at S604. The tract at residues 651–673 (LNLLLDKLRSTGASFIRCIKPNL) is actin-binding. The segment at 782-810 (KRVNHWLICSRWKKVQWCSLSVIKLKNKI) is required for binding calmodulin. In terms of domain architecture, IQ spans 813–842 (RAEACIKMQKTIRMWLCKRRHKPRIDGLVK). Residues 835 to 916 (PRIDGLVKVG…EVLLSALQKK (82 aa)) form a three-helix bundle region. The tract at residues 917-984 (KQQEEEAERL…EDDEKRIQAE (68 aa)) is SAH. Residues 934 to 955 (EKERKRREEDEQRRRKEEEERR) are disordered. The interaction with TAX1BP1 and CALCOCO2/NDP52 stretch occupies residues 1061 to 1286 (KEMSEILSRG…ESRQARPTYA (226 aa)). The segment at 1117–1119 (RRL) is interaction with OPTN. S1156 is modified (phosphoserine). Residues 1158–1286 (QQNPAAQLPA…ESRQARPTYA (129 aa)) form an interaction with TOM1 region.

This sequence belongs to the TRAFAC class myosin-kinesin ATPase superfamily. Myosin family. Homodimer; dimerization seems to implicate the unfolding of the three-helix bundle region creating an additional calmodulin binding site, and cargo binding. Able to function as a monomer under specific conditions in vitro. Forms a complex with CFTR and DAB2 in the apical membrane of epithelial cells. Component of the DISP/DOCK7-induced septin displacement complex, at least composed of DOCK7, LRCH3 and MYO6. Binding to calmodulin through a unique insert, not found in other myosins, located in the neck region between the motor domain and the IQ domain appears to contribute to the directionality reversal. This interaction occurs only if the C-terminal lobe of calmodulin is occupied by calcium. Interaction with F-actin/ACTN1 occurs only at the apical brush border domain of the proximal tubule cells. Interacts with DAB2. In vitro, the C-terminal globular tail binds a C-terminal region of DAB2. Interacts with CFTR. Interacts with CABP5. Interacts (via residues 1158-1286) with TOM1 (via residues 392-463). Interacts (via residues 1060-1285) with OPTN. Interacts (via residues 1060-1285) with TAX1BP1 and CALCOCO2/NDP52. Interacts with TOM1L2. Interacts with CLIC5; may work together in a complex which also includes RDX and MYO6 to stabilize linkages between the plasma membrane and subjacent actin cytoskeleton at the base of stereocilia. Phosphorylation in the motor domain, induced by EGF, results in translocation of MYO6 from the cell surface to membrane ruffles and affects F-actin dynamics. Phosphorylated in vitro by p21-activated kinase (PAK). In terms of tissue distribution, expressed in the retina (at protein level).

It is found in the golgi apparatus. The protein resides in the trans-Golgi network membrane. It localises to the nucleus. The protein localises to the cytoplasm. Its subcellular location is the perinuclear region. It is found in the membrane. The protein resides in the clathrin-coated pit. It localises to the cytoplasmic vesicle. The protein localises to the clathrin-coated vesicle. Its subcellular location is the cell projection. It is found in the filopodium. The protein resides in the ruffle membrane. It localises to the microvillus. The protein localises to the cytosol. Myosins are actin-based motor molecules with ATPase activity. Unconventional myosins serve in intracellular movements. Myosin 6 is a reverse-direction motor protein that moves towards the minus-end of actin filaments. Has slow rate of actin-activated ADP release due to weak ATP binding. Functions in a variety of intracellular processes such as vesicular membrane trafficking and cell migration. Required for the structural integrity of the Golgi apparatus via the p53-dependent pro-survival pathway. Appears to be involved in a very early step of clathrin-mediated endocytosis in polarized epithelial cells. Together with TOM1, mediates delivery of endocytic cargo to autophagosomes thereby promoting autophagosome maturation and driving fusion with lysosomes. Links TOM1 with autophagy receptors, such as TAX1BP1; CALCOCO2/NDP52 and OPTN. May act as a regulator of F-actin dynamics. As part of the DISP complex, may regulate the association of septins with actin and thereby regulate the actin cytoskeleton. May play a role in transporting DAB2 from the plasma membrane to specific cellular targets. May play a role in the extension and network organization of neurites. Required for structural integrity of inner ear hair cells. Required for the correct localization of CLIC5 and RDX at the stereocilium base. Modulates RNA polymerase II-dependent transcription. This Bos taurus (Bovine) protein is Unconventional myosin-VI.